Reading from the N-terminus, the 180-residue chain is O-acetyl-ADP-ribose deacetylase (180 aa).

The Macro domain occupies 1–175 (MSGRINVVQG…LYQRLLGQYD (175 aa)). Residues 11-12 (DI), Asn25, 33-35 (GVD), and 122-126 (STGIY) contribute to the substrate site. Asp35 functions as the Proton acceptor in the catalytic mechanism.

It belongs to the MacroD-type family. YmdB subfamily. As to quaternary structure, homodimer. Interacts with RNase III.

It catalyses the reaction 3''-O-acetyl-ADP-D-ribose + H2O = ADP-D-ribose + acetate + H(+). The catalysed reaction is 2''-O-acetyl-ADP-D-ribose + H2O = ADP-D-ribose + acetate + H(+). Its function is as follows. Deacetylates O-acetyl-ADP ribose to yield ADP-ribose and free acetate. Down-regulates ribonuclease 3 (RNase III) activity. Acts by interacting directly with the region of the ribonuclease that is required for dimerization/activation. This chain is O-acetyl-ADP-ribose deacetylase, found in Cronobacter sakazakii (strain ATCC BAA-894) (Enterobacter sakazakii).